Reading from the N-terminus, the 348-residue chain is Inositol 2-dehydrogenase/D-chiro-inositol 3-dehydrogenase (348 aa).

It belongs to the Gfo/Idh/MocA family. Homotetramer.

It carries out the reaction myo-inositol + NAD(+) = scyllo-inosose + NADH + H(+). The catalysed reaction is 1D-chiro-inositol + NAD(+) = scyllo-inosine + NADH + H(+). It functions in the pathway polyol metabolism; myo-inositol degradation into acetyl-CoA; acetyl-CoA from myo-inositol: step 1/7. Involved in the oxidation of myo-inositol (MI) and D-chiro-inositol (DCI) to 2-keto-myo-inositol (2KMI or 2-inosose) and 1-keto-D-chiro-inositol (1KDCI), respectively. The protein is Inositol 2-dehydrogenase/D-chiro-inositol 3-dehydrogenase of Halalkalibacterium halodurans (strain ATCC BAA-125 / DSM 18197 / FERM 7344 / JCM 9153 / C-125) (Bacillus halodurans).